The sequence spans 298 residues: Proline-rich protein 32 (298 aa).

Residues 36-56 (CLSSKPEDDAEPWGQPQVPLR) form a disordered region.

This chain is Proline-rich protein 32 (PRR32), found in Homo sapiens (Human).